Here is a 363-residue protein sequence, read N- to C-terminus: MRKSTVYSWINKKKYILKINVISIINYIWFKKTIMRFFLYPFSLIYFLVIKIIYILYKCNFKKTYNFNIPIIVIGNITVGGNGKTPLVIWLSKQLKKRKWKVGVVSRGYGRKYDFPIIINSNFTHDICGDEPILIHKRSNVPVAVSSNRILAIKMLLEYYNLDIIISDDGLQHHSMGRCIEWIVIDNNRKFGNNLLLPAGPMRETKKKLNKVNKVIINGCCRNKNIIKMNLYHKNYVINLLNGSKKRLNDLFPTILISGISNNKNFFSMVRKSGIIPIREISFPDHYIYDKNILTSLTKNNEHLLMTEKDSIKCKYFAKINWWYLPIYVFFSKKCKEVLLSSVEKKIIIFKFKNKKNNIFNKI.

78–85 provides a ligand contact to ATP; the sequence is TVGGNGKT.

It belongs to the LpxK family.

The catalysed reaction is a lipid A disaccharide + ATP = a lipid IVA + ADP + H(+). Its pathway is glycolipid biosynthesis; lipid IV(A) biosynthesis; lipid IV(A) from (3R)-3-hydroxytetradecanoyl-[acyl-carrier-protein] and UDP-N-acetyl-alpha-D-glucosamine: step 6/6. Functionally, transfers the gamma-phosphate of ATP to the 4'-position of a tetraacyldisaccharide 1-phosphate intermediate (termed DS-1-P) to form tetraacyldisaccharide 1,4'-bis-phosphate (lipid IVA). The sequence is that of Tetraacyldisaccharide 4'-kinase from Wigglesworthia glossinidia brevipalpis.